A 968-amino-acid polypeptide reads, in one-letter code: RNA polymerase-associated protein RapA (968 aa).

Residues 163–332 (EVGRRFAPRV…FARLRLLDPD (170 aa)) enclose the Helicase ATP-binding domain. An ATP-binding site is contributed by 176-183 (DEVGLGKT). A DEAH box motif is present at residues 278–281 (DEAH). The region spanning 491–641 (RVDWLINFLK…AFEQTCPSGH (151 aa)) is the Helicase C-terminal domain.

Belongs to the SNF2/RAD54 helicase family. RapA subfamily. In terms of assembly, interacts with the RNAP. Has a higher affinity for the core RNAP than for the holoenzyme. Its ATPase activity is stimulated by binding to RNAP.

Its function is as follows. Transcription regulator that activates transcription by stimulating RNA polymerase (RNAP) recycling in case of stress conditions such as supercoiled DNA or high salt concentrations. Probably acts by releasing the RNAP, when it is trapped or immobilized on tightly supercoiled DNA. Does not activate transcription on linear DNA. Probably not involved in DNA repair. The protein is RNA polymerase-associated protein RapA of Shewanella sediminis (strain HAW-EB3).